The following is a 466-amino-acid chain: Probable Xaa-Pro aminopeptidase pepP (466 aa).

Mn(2+) contacts are provided by D264, D275, E398, and E438.

This sequence belongs to the peptidase M24B family. The cofactor is Mn(2+).

It carries out the reaction Release of any N-terminal amino acid, including proline, that is linked to proline, even from a dipeptide or tripeptide.. Catalyzes the removal of a penultimate prolyl residue from the N-termini of peptides. This is Probable Xaa-Pro aminopeptidase pepP (pepP) from Aspergillus niger (strain ATCC MYA-4892 / CBS 513.88 / FGSC A1513).